The following is a 413-amino-acid chain: Palmitoyltransferase ZDHHC6 (413 aa).

At 1–24 the chain is on the cytoplasmic side; the sequence is MGTFCSVIKFENLQELKRLCHWGP. Residues 25-45 form a helical membrane-spanning segment; that stretch reads IIALGVIAICSTMAMIDSVLW. Residues 46-57 are Lumenal-facing; it reads YWPLHTTGGSVN. Residues 58–78 form a helical membrane-spanning segment; sequence FIMLINWTVMILYNYFNAMFV. Over 79 to 143 the chain is Cytoplasmic; it reads GPGFVPLGWK…NCCGYQNHAS (65 aa). One can recognise a DHHC domain in the interval 99–149; that stretch reads QYCKVCQAYKAPRSHHCRKCNRCVMKMDHHCPWINNCCGYQNHASFTLFLL. C129 functions as the S-palmitoyl cysteine intermediate in the catalytic mechanism. Residues 144–164 traverse the membrane as a helical segment; the sequence is FTLFLLLAPLGCIHAAFIFVM. Over 165-205 the chain is Lumenal; it reads TMYTQLYHRLSFGWNTVKIDMSAARRDPLPIVPFGLAAFAT. Residues 206 to 226 form a helical membrane-spanning segment; it reads TLFALGLALGTTIAVGMLFFI. Residues 227-413 are Cytoplasmic-facing; the sequence is QMKIILRNKT…QAPEGEKKNR (187 aa). An SH3 domain is found at 313–398; that stretch reads VRSVRYKVIE…PRKCVEKCPC (86 aa). Residues C328, C329, and C343 are each lipidated (S-palmitoyl cysteine). A Di-lysine motif motif is present at residues 410–413; sequence KKNR.

It belongs to the DHHC palmitoyltransferase family. In terms of assembly, homooligomerizes. Interacts with SELENOK. Post-translationally, palmitoylated at 3 different sites by ZDHHC16. The combination of the different palmitoylation events strongly affects the quaternary assembly of ZDHHC6, its localization, stability and function. Palmitoylation at Cys-328 accelerates the turnover of ZDHHC6. Depalmitoylated by LYPLA2.

The protein resides in the endoplasmic reticulum membrane. The catalysed reaction is L-cysteinyl-[protein] + hexadecanoyl-CoA = S-hexadecanoyl-L-cysteinyl-[protein] + CoA. The enzyme catalyses L-cysteinyl-[protein] + octadecanoyl-CoA = S-octadecanoyl-L-cysteinyl-[protein] + CoA. Its function is as follows. Endoplasmic reticulum palmitoyl acyltransferase that mediates palmitoylation of proteins such as AMFR, CALX, ITPR1 and TFRC. Palmitoylates calnexin (CALX), which is required for its association with the ribosome-translocon complex and efficient folding of glycosylated proteins. Mediates palmitoylation of AMFR, promoting AMFR distribution to the peripheral endoplasmic reticulum. Together with SELENOK, palmitoylates ITPR1 in immune cells, leading to regulate ITPR1 stability and function. Stearoyltransferase that mediates stearoylation of TFRC to inhibit TFRC-mediated activation of the JNK pathway and mitochondrial fragmentation. The chain is Palmitoyltransferase ZDHHC6 from Homo sapiens (Human).